Consider the following 98-residue polypeptide: Transcription elongation factor A protein-like 7 (98 aa).

A compositionally biased stretch (basic and acidic residues) spans 1–24; the sequence is MQRSCNEKEGKPKCSEPKREEEHP. Positions 1–31 are disordered; it reads MQRSCNEKEGKPKCSEPKREEEHPYGAFEGQ. Residues 59–89 are a coiled coil; sequence GEEMTGEEEEMERCLEEIRSLRKKFRALHSN.

Belongs to the TFS-II family. TFA subfamily.

The protein localises to the nucleus. Its function is as follows. Plays a role in the negative regulation of NF-kappa-B signaling at the basal level by modulating transcriptional activity of NF-kappa-B on its target gene promoters. Associates with cyclin D1 promoter containing Myc E-box sequence and transcriptionally represses cyclin D1 expression. Regulates telomerase reverse transcriptase expression and telomerase activity in both ALT (alternative lengthening of telomeres)and telomerase-positive cell lines. The sequence is that of Transcription elongation factor A protein-like 7 (Tceal7) from Rattus norvegicus (Rat).